Here is a 456-residue protein sequence, read N- to C-terminus: CCA-adding enzyme (456 aa).

ATP-binding residues include serine 53 and lysine 56. Positions 53 and 56 each coordinate CTP. Residues aspartate 65, aspartate 67, and aspartate 119 each contribute to the Mg(2+) site. ATP contacts are provided by histidine 142, lysine 161, and tyrosine 170. Residues histidine 142, lysine 161, and tyrosine 170 each contribute to the CTP site.

It belongs to the tRNA nucleotidyltransferase/poly(A) polymerase family. Archaeal CCA-adding enzyme subfamily. As to quaternary structure, homodimer. Mg(2+) is required as a cofactor.

The enzyme catalyses a tRNA precursor + 2 CTP + ATP = a tRNA with a 3' CCA end + 3 diphosphate. The catalysed reaction is a tRNA with a 3' CCA end + 2 CTP + ATP = a tRNA with a 3' CCACCA end + 3 diphosphate. In terms of biological role, catalyzes the addition and repair of the essential 3'-terminal CCA sequence in tRNAs without using a nucleic acid template. Adds these three nucleotides in the order of C, C, and A to the tRNA nucleotide-73, using CTP and ATP as substrates and producing inorganic pyrophosphate. tRNA 3'-terminal CCA addition is required both for tRNA processing and repair. Also involved in tRNA surveillance by mediating tandem CCA addition to generate a CCACCA at the 3' terminus of unstable tRNAs. While stable tRNAs receive only 3'-terminal CCA, unstable tRNAs are marked with CCACCA and rapidly degraded. This is CCA-adding enzyme from Thermococcus kodakarensis (strain ATCC BAA-918 / JCM 12380 / KOD1) (Pyrococcus kodakaraensis (strain KOD1)).